Reading from the N-terminus, the 591-residue chain is Aspartate--tRNA(Asp/Asn) ligase (591 aa).

Glutamate 176 contacts L-aspartate. Residues 200–203 (QLFK) form an aspartate region. Residue arginine 222 participates in L-aspartate binding. ATP-binding positions include 222–224 (RDE) and glutamine 231. Histidine 450 contacts L-aspartate. Glutamate 484 is a binding site for ATP. Residue arginine 491 coordinates L-aspartate. 536-539 (GLDR) contributes to the ATP binding site.

The protein belongs to the class-II aminoacyl-tRNA synthetase family. Type 1 subfamily. Homodimer.

It localises to the cytoplasm. The enzyme catalyses tRNA(Asx) + L-aspartate + ATP = L-aspartyl-tRNA(Asx) + AMP + diphosphate. Functionally, aspartyl-tRNA synthetase with relaxed tRNA specificity since it is able to aspartylate not only its cognate tRNA(Asp) but also tRNA(Asn). Reaction proceeds in two steps: L-aspartate is first activated by ATP to form Asp-AMP and then transferred to the acceptor end of tRNA(Asp/Asn). The polypeptide is Aspartate--tRNA(Asp/Asn) ligase (Bacillus mycoides (strain KBAB4) (Bacillus weihenstephanensis)).